An 88-amino-acid chain; its full sequence is UPF0297 protein Cphy_2298 (88 aa).

This sequence belongs to the UPF0297 family.

The sequence is that of UPF0297 protein Cphy_2298 from Lachnoclostridium phytofermentans (strain ATCC 700394 / DSM 18823 / ISDg) (Clostridium phytofermentans).